A 176-amino-acid chain; its full sequence is Cytochrome c oxidase subunit 5b-1, mitochondrial (176 aa).

Residues 1 to 55 (MWRRIVSSQLKTLAADVVAASPRRSIAATTRPVGFYLAANRSAISASSFVIPRRF) constitute a mitochondrion transit peptide. Zn(2+) is bound by residues Cys122, Cys146, and Cys149. The tract at residues 157 to 176 (VVGPGGPPDGHGDEDDEHHH) is disordered.

This sequence belongs to the cytochrome c oxidase subunit 5B (TC 3.D.4.11) family.

It is found in the mitochondrion inner membrane. Functionally, this protein is one of the nuclear-coded polypeptide chains of cytochrome c oxidase, the terminal oxidase in mitochondrial electron transport. The polypeptide is Cytochrome c oxidase subunit 5b-1, mitochondrial (COX5B-1) (Arabidopsis thaliana (Mouse-ear cress)).